The following is a 323-amino-acid chain: tRNA dimethylallyltransferase (323 aa).

Position 12–19 (12–19 (GPTAAGKT)) interacts with ATP. 14 to 19 (TAAGKT) is a substrate binding site. 2 interaction with substrate tRNA regions span residues 37–40 (DSAL) and 161–165 (QRLIR).

The protein belongs to the IPP transferase family. As to quaternary structure, monomer. Mg(2+) serves as cofactor.

It catalyses the reaction adenosine(37) in tRNA + dimethylallyl diphosphate = N(6)-dimethylallyladenosine(37) in tRNA + diphosphate. Functionally, catalyzes the transfer of a dimethylallyl group onto the adenine at position 37 in tRNAs that read codons beginning with uridine, leading to the formation of N6-(dimethylallyl)adenosine (i(6)A). The chain is tRNA dimethylallyltransferase from Pseudomonas syringae pv. syringae (strain B728a).